The sequence spans 1530 residues: MLKGSSSTSFLLPQQFVEPLPHAPVEISALHYGLLSRNDVHRLSVLPCRRVVGDVKEYGVNDARLGVCDRLSICETCGLNSIECVGHPGHIDLEAPVFHLGFFTTVLRICRTICKRCSHVLLDDTEIDYYKRRLSSSSLEPLQRTMLIKTIQTDAYKTRVCLKCGGLNGVVRRVRPMRLVHEKYHVEPRRGEGPRENPGGFFDAELRTACAYNKVVGECREFVHDFLDPVRVRQLFLAVPPGEVILLGLAPGVSPTDLLMTTLLVPPVPVRPRGCAGTTTVRDDDLTAQYNDILVSTDTMQDGSLDATRYTETWEMLQMRAARLLDSSLPGFPPNVRTSDLKSYAQRLKSKHGRFRCNLSGKRVDYSGRSVISPDPNLDVDELAVPLHVARVLTYPQRVFKANHELMRRLVRNGPHVHPGATTVYLAQEGSKKSLKNERDRHRLAARLAVGDIVERHVMNGDLVLFNRQPSLHRVSMMAHRARVLPFRTFRFNECCCAPYNADFDGDEMNVHFVQTEKARAEALQLMSTARNIISAKNGEPIIACTQDFLAAAYLVTSRDVFFDRGEFSQMVSHWLGPVTQFRLPIPAILKPVELWTGKQLFELIVRPSPEVDVLLSFEAPTKFYTRKGKHDCAEEGYVAFLDSCFISGRLDKKLLGGGAKDGLFARLHTIAGGGYTARVMSRIAQFTSRYLTNYGFSLGLGDVAPTPELNKQKAAVLARSVEVCDGLIKSAKTGRMIPLPGLTVKQSLEARLNTELSKVRDECGTAAVQTLSIHNNTPLIMVQSGSKGSALNIAQMMACVGQQTVSGKRILDAFQDRSLPHFHRFEEAPAARGFVANSFYSGLSPTEFFFHTMAGREGLVDTAVKTAETGYIYRRLMKAMENLSVRYDGTVRNTKGDVIQLRFGEDGLDPQLMEGNSGTPLNLEQEWLSVRAAYARWVVGLLAGSKTASDGNAIRDNENYFNEFISMLPTEGPSFVEACLNGDQEALKVCEEQESREDALHNSNGKTNDRESRPRTGRLRRAVLISHLVKVCSRKFKDDIQDFFVKKVREQQRIRNLLNLPNTSRERTEGGGDNSGPIANKRTKKRAPSLKVKDSKEGGRVSELRDLEMLQTELLPLTRGMVTRFIAQCASKYLRKACEPGTPCGAIAAQSVGEPSTQMTLRTFHFAGVASMSITQGVPRLVEVINANRNIATPVVTAPVLLMEGEENHCEIFRKRARFVKAQIERVLLREVVSEIVEVCSDTEFYLRVHLNMSVITKLHLPINAITVRQRILAAAGHTMSPLRMLNEDCIEVFSLDTLAVYPHFQDARWVHFSLRRILGLLPDVVVGGIGGINRAMISSNGTEVLAEGAELRAVMNLWGVDSTRVVCNHVAVVERVLGIEAARRVIVDEIQNILKAYSLSIDVRHVYLLADLMTQRGVVLGITRYGIQKMNFNVLTMASFERTTDHLYNAAATQRVDRDLSVSDSIIVGKPVPLGTTSFDLLLDGSISNDILPPQRCVKRGMGPNFHTAKRHHLVPLAAEGVFRLDLF.

Cysteine 74, cysteine 77, cysteine 84, histidine 87, cysteine 114, cysteine 117, and cysteine 161 together coordinate Zn(2+). Mg(2+) is bound by residues aspartate 503, aspartate 505, and aspartate 507. A bridging helix region spans residues 846–858 (PTEFFFHTMAGRE). Residues 992-1001 (EEQESREDAL) show a composition bias toward basic and acidic residues. 2 disordered regions span residues 992-1016 (EEQESREDALHNSNGKTNDRESRPR) and 1057-1099 (NLLN…SKEG).

The protein belongs to the RNA polymerase beta' chain family. As to quaternary structure, component of the RNA polymerase III (Pol III) complex consisting of 17 subunits.

The protein localises to the nucleus. The enzyme catalyses RNA(n) + a ribonucleoside 5'-triphosphate = RNA(n+1) + diphosphate. DNA-dependent RNA polymerase catalyzes the transcription of DNA into RNA using the four ribonucleoside triphosphates as substrates. Largest and catalytic core component of RNA polymerase III which synthesizes small RNAs, such as 5S rRNA and tRNAs. Forms the polymerase active center together with the second largest subunit. A single-stranded DNA template strand of the promoter is positioned within the central active site cleft of Pol III. A bridging helix emanates from RPC1 and crosses the cleft near the catalytic site and is thought to promote translocation of Pol III by acting as a ratchet that moves the RNA-DNA hybrid through the active site by switching from straight to bent conformations at each step of nucleotide addition. This chain is DNA-directed RNA polymerase III subunit RPC1, found in Trypanosoma brucei brucei.